We begin with the raw amino-acid sequence, 826 residues long: Arsenite oxidase subunit AioA (826 aa).

Positions 22, 25, and 29 each coordinate [3Fe-4S] cluster. Positions 196, 204, 419, and 423 each coordinate substrate.

This sequence belongs to the prokaryotic molybdopterin-containing oxidoreductase family. As to quaternary structure, heterodimer consisting of a large and a small subunit. [3Fe-4S] cluster serves as cofactor. It depends on Mo-bis(molybdopterin guanine dinucleotide) as a cofactor.

The enzyme catalyses 2 oxidized [azurin] + arsenite + H2O = 2 reduced [azurin] + arsenate + 3 H(+). In terms of biological role, involved in the detoxification of arsenic. Oxidizes As(III)O3(3-) (arsenite) to the somewhat less toxic As(V)O4(3-) (arsenate). The polypeptide is Arsenite oxidase subunit AioA (aioA) (Herminiimonas arsenicoxydans).